The following is a 184-amino-acid chain: Guanylate kinase (184 aa).

A Guanylate kinase-like domain is found at 5 to 183 (NGLIVITGPS…ALLEIKKLIK (179 aa)). 12–19 (GPSGVGKG) contributes to the ATP binding site.

This sequence belongs to the guanylate kinase family.

It localises to the cytoplasm. It catalyses the reaction GMP + ATP = GDP + ADP. Functionally, essential for recycling GMP and indirectly, cGMP. This is Guanylate kinase from Prochlorococcus marinus (strain SARG / CCMP1375 / SS120).